The sequence spans 811 residues: Zinc finger CCCH domain-containing protein 11A (811 aa).

3 C3H1-type zinc fingers span residues 2–30 (PNQGEDCYFFFFYSTCTKGDSCPFRHCEA), 32–58 (LGNETVCTLWQEGRCFRQVCRFRHMEI), and 61–87 (KRSEIPCYWENQPTGCQKLNCAFHHNR). At serine 109 the chain carries Phosphoserine. Glycyl lysine isopeptide (Lys-Gly) (interchain with G-Cter in SUMO2) cross-links involve residues lysine 115 and lysine 125. A Phosphoserine modification is found at serine 133. Disordered regions lie at residues 140–195 (MKVE…GLRV), 224–258 (KKMKEKSKKQGEGSSGVSSLLLHPEPVPGPEKENV), 286–352 (GKRK…EKVN), and 368–434 (ERAS…TCIK). Residue lysine 141 forms a Glycyl lysine isopeptide (Lys-Gly) (interchain with G-Cter in SUMO2) linkage. 2 positions are modified to phosphoserine: serine 150 and serine 172. Acidic residues predominate over residues 161–176 (ADDDEDDDDQFSEEGD). Serine 291 is subject to Phosphoserine. Basic and acidic residues-rich tracts occupy residues 310-323 (KKVEAPEANIDKTP) and 368-391 (ERASQKRGELQTKLKTEGPSKTDD). Phosphothreonine is present on threonine 322. Residues 363 to 424 (EEILLERASQ…KHRQQEAERQ (62 aa)) adopt a coiled-coil conformation. Phosphoserine is present on serine 371. Positions 392–403 (STSGARSSSTIR) are enriched in polar residues. A compositionally biased stretch (basic and acidic residues) spans 418-434 (QQEAERQKSKKDTTCIK). Lysine 479 is covalently cross-linked (Glycyl lysine isopeptide (Lys-Gly) (interchain with G-Cter in SUMO2)). The disordered stretch occupies residues 483–550 (ALRVQQSSES…KEASGETTGV (68 aa)). Residues 487-499 (QQSSESSTSSPSQ) are compositionally biased toward low complexity. Residue lysine 620 forms a Glycyl lysine isopeptide (Lys-Gly) (interchain with G-Cter in SUMO2) linkage. Positions 716 to 769 (TVPEAENPRDSLVLPPTQSSSDSSPPEVSGPSSSQMSMKTRRLSSASTGKPQLS) are disordered. Over residues 730 to 749 (PPTQSSSDSSPPEVSGPSSS) the composition is skewed to low complexity. Residues 750 to 766 (QMSMKTRRLSSASTGKP) show a composition bias toward polar residues.

As to quaternary structure, interacts with TREX complex components THOC2, DDX39 and POLDIP3; the interactions are ATP-dependent. Interacts with PABPN1; this interaction retains ZC3H11A in nuclear speckles. Interacts with KPNA3.

Its subcellular location is the nucleus speckle. In terms of biological role, through its association with TREX complex components, may participate in the export and post-transcriptional coordination of selected mRNA transcripts, including those required to maintain the metabolic processes in embryonic cells. Binds RNA. In Pongo abelii (Sumatran orangutan), this protein is Zinc finger CCCH domain-containing protein 11A (ZC3H11A).